The following is a 419-amino-acid chain: Aminoacyltransferase FemB (419 aa).

This sequence belongs to the FemABX family. In terms of assembly, homodimer. Interacts with FemA.

It localises to the cytoplasm. It carries out the reaction MurNAc-L-Ala-D-isoglutaminyl-L-Lys-(N(6)-tri-Gly)-D-Ala-D-Ala-diphospho-di-trans,octa-cis-undecaprenyl-GlcNAc + 2 glycyl-tRNA(Gly) = MurNAc-L-Ala-D-isoglutaminyl-L-Lys-(N(6)-penta-Gly)-D-Ala-D-Ala-diphospho-di-trans,octa-cis-undecaprenyl-GlcNAc + 2 tRNA(Gly) + 2 H(+). Functionally, catalyzes the formation of the pentaglycine interpeptide bridge, which is characteristic of the S.aureus peptidoglycan. Adds glycines 4 and 5 of the pentaglycine bridge, using glycyl-tRNA(Gly) as donor. Involved in resistance to methicillin. The sequence is that of Aminoacyltransferase FemB (femB) from Staphylococcus aureus (strain MW2).